We begin with the raw amino-acid sequence, 272 residues long: Nitrogenase iron protein (272 aa).

8–15 (GKGGIGKS) provides a ligand contact to ATP. C94 contributes to the [4Fe-4S] cluster binding site. R97 carries the post-translational modification ADP-ribosylarginine; by dinitrogenase reductase ADP-ribosyltransferase. C129 is a [4Fe-4S] cluster binding site.

Belongs to the NifH/BchL/ChlL family. In terms of assembly, homodimer. Requires [4Fe-4S] cluster as cofactor. In terms of processing, the reversible ADP-ribosylation of Arg-97 inactivates the nitrogenase reductase and regulates nitrogenase activity.

It carries out the reaction N2 + 8 reduced [2Fe-2S]-[ferredoxin] + 16 ATP + 16 H2O = H2 + 8 oxidized [2Fe-2S]-[ferredoxin] + 2 NH4(+) + 16 ADP + 16 phosphate + 6 H(+). Functionally, the key enzymatic reactions in nitrogen fixation are catalyzed by the nitrogenase complex, which has 2 components: the iron protein and the molybdenum-iron protein. The chain is Nitrogenase iron protein from Clostridium acetobutylicum (strain ATCC 824 / DSM 792 / JCM 1419 / IAM 19013 / LMG 5710 / NBRC 13948 / NRRL B-527 / VKM B-1787 / 2291 / W).